Consider the following 52-residue polypeptide: Eukaryotic translation initiation factor 2 subunit 1 (52 aa).

Residues 16–52 (EDVVMVNVRSIAEMGAYVSLLEYNNIEGRILLSELSR) enclose the S1 motif domain. Phosphoserine; by HRI is present on Ser-48. Phosphoserine is present on Ser-51.

Belongs to the eIF-2-alpha family. In terms of assembly, eukaryotic translation initiation factor 2 eIF2 is a heterotrimeric complex composed of an alpha (EIF2S1), a beta (EIF2S2) and a gamma (EIF2S3) chain. eIF2 is member of the 43S pre-initiation complex (43S PIC). eIF2 forms a complex with at least CELF1/CUGBP1, CALR, CALR3, EIF2S1, EIF2S2, HSP90B1 and HSPA5. Interaction with METAP2 protects EIF2S1 from inhibitory phosphorylation. Interacts with ABCF1. Associates with ribosomes. Interacts with DDX3X in an RNA-independent manner. Post-translationally, phosphorylation at Ser-48 and Ser-51 stabilizes the eIF-2/GDP/eIF2B complex and prevents GDP/GTP exchange reaction, thus impairing the recycling of eIF-2 between successive rounds of initiation and leading to global inhibition of translation, while concomitantly initiating the preferential translation of integrated stress response (ISR)-specific mRNAs. Substrate for at least 4 kinases: EIF2AK1/HRI, EIF2AK2/PKR, EIF2AK3/PERK and EIF2AK4/GCN2. Phosphorylation on Ser-51 by the EIF2AK4/GCN2 protein kinase occurs in response to amino acid starvation and UV irradiation. Phosphorylation at Ser-51 by the EIF2AK3/PERK protein kinase occurs in response to the unfolded protein response. Phosphorylation at Ser-51 by EIF2AK1/HRI in response to mitochondrial damage promotes relocalization to the mitochondrial surface.

Its subcellular location is the cytoplasm. It localises to the stress granule. The protein resides in the cytosol. The protein localises to the mitochondrion. Its activity is regulated as follows. Activity is regulated by phosphorylation at Ser-49 and Ser-52, which stabilizes the eIF2/GDP/eIF2B complex and prevents the eIF2B-mediated exchange of GDP for GTP, thereby preventing the formation of the 43S pre-initiation complex (43S PIC). This results in the global attenuation of 5' cap-dependent protein synthesis and concomitant translation of ISR-specific mRNAs that contain a short upstream open reading frame (uORF) in their 5' UTR, such as ATF4, ATF5, DDIT3/CHOP and PPP1R15A/GADD34. Functionally, member of the eIF2 complex that functions in the early steps of protein synthesis by forming a ternary complex with GTP and initiator tRNA. This complex binds to a 40S ribosomal subunit, followed by mRNA binding to form a 43S pre-initiation complex. Junction of the 60S ribosomal subunit to form the 80S initiation complex is preceded by hydrolysis of the GTP bound to eIF2 and release of an eIF2-GDP binary complex. In order for eIF2 to recycle and catalyze another round of initiation, the GDP bound to eIF2 must exchange with GTP by way of a reaction catalyzed by eIF2B. EIF2S1/eIF2-alpha is a key component of the integrated stress response (ISR), required for adaptation to various stress: phosphorylation by metabolic-stress sensing protein kinases (EIF2AK1/HRI, EIF2AK2/PKR, EIF2AK3/PERK and EIF2AK4/GCN2) in response to stress converts EIF2S1/eIF2-alpha in a global protein synthesis inhibitor, leading to a attenuation of cap-dependent translation, while concomitantly initiating the preferential translation of ISR-specific mRNAs, such as the transcriptional activators ATF4 and QRICH1, and hence allowing ATF4- and QRICH1-mediated reprogramming. EIF2S1/eIF2-alpha also acts as an activator of mitophagy in response to mitochondrial damage: phosphorylation by EIF2AK1/HRI promotes relocalization to the mitochondrial surface, thereby triggering PRKN-independent mitophagy. This is Eukaryotic translation initiation factor 2 subunit 1 (EIF2S1) from Oryctolagus cuniculus (Rabbit).